The sequence spans 2200 residues: MIQFRNKNNSMNRIARHLRNVARRKGSSLLLFLMLSTVLVAAKEDDPARLVVRPDSSTVVDESKISFFCRADGNPLPSVIWRVNGKSITDHNRISIKSLATGLSTLRFERVSLDDNATVVSCSADNGVANPVVAEASLTVVPRDKVPIGFPQIELHPSLKSVEQGKTAYVSCRVRGDPRAKVLWLRDLIPLDIRADGRYSVSTIGNPGALMIQHAREEDQGKYECIARNTLGVAHSKAANLYVKVRRVPPYFSYKLERQYVVGVGGNINLTCVAVGYPMPRVFWKKTDLMVLDDPSTAPIGKNVLTLTHVESTENFTCVAVSALGNIEATTTVIAKELPPPPVNIVVSSVTSESVVITWKPPKYNEAINKYVVNYRLKYSEGRSSRGKTMETLENSLVIDGLVAFQTYEFTVRSAGPVGVGLESLPVEAQTKPSKPATAPVSPQARSLNRDSILVKWGPCEQPNGLITGYKVYYTNDLVTTPIREWKQHDAKSDEFMTTINGLEPDSRYFVRVIAQNSEGDSPLSTLVTVATRQGIPGQPPMLTVKALDSRRMQLTWDKPLYSSPVVGYTVRYNTSDGEKELTLTSPHEKHVVTGLHPDKYYYFRVAAYSDRGQGEFTEPMISKTIASIPLSSPTIVSAAATSSKSVEIRWKGPEQKKLNGVLTAYRINYFRLEDSKTANLESVEYDEDMDDSSSFLDRMSVVVPSDATSYVLSDLLPYSSYEITVAASTMDGYGPESSIRVVKTLEDVPSAPRNFNAELTSATSVKLTWDAPAAANGALLGYYVYLDRMVNGEPVVEKGSKKRIVMIRDSSKRYFELDSLDPNTEYSFRLNAFNRNGDGEFSERKSIITQGIPPEAPEIVSVSLDRDEPPVVARIEWKMPKMKPNETPIEKYNLWLRAQGYPDSYVKAKTVDGTDLSTTISGLWMGVVYDVLLAAENREGRSQNATETIATPVGSPDGEPIDVQYEVMKGKIVVSWRPPSEEKRNGNITSYKAILSAMDATADRYEQPVPAPSTSSTFEVNVRRAYLFKVAAATMKGIGPYSPVLTINPDPAALVGPPTNVRVEATSNSTAVVQWDFESQKADSFVVKYMHEPGNRMDTEKWKQLPVVSIDKENPKRFAVVSDLNAHKPYAFCVLAVKNNLTLNEQFNKVRVTNYMTNFQRQGPCSDPPTVLESVTPTYMVQNLRVLWKTSNSVQLTWEYNGPRNVGFYVNHTGRKDYVNHELQEKTMSTPGFGQDVDEKHREYLWTNLRPHMMYTIHVGVRTLPPGARKYWPQEVVTITDPTGPPFVDVPKLVDSSGTQPGQQMIRLTPATEEYGPISHYWIILVPANYSTEDVVNLDPIELEKATAEKRAQLARSLSVSPSKKLKRKASEVGDDSQSASYHPKEKRARRATVPGAYVTARLSADRVKQQYRNNQPFIVGDSQLYDGFTNYPLEHNLHYRLMMRAFAKNDVRTKDSFEQRAPMSEKLSRMYSDSVLTEPFTIKSALRGASQKSSPWVGACIAFLVLFSIVGMLICWWLRCNKKSAGRHPRHGSITKVALTGNIMNGGGGIPGETSKLLSTSNEYGRQIMNPYEQMNGNHHMESSMDLYPLPTSHSRSNGYAPVPVAIPSLPNNGNNMTTVSHPAVPIAELANHIERLRMNNNAGFQSEFESIETGQHFTWEHSSADMNKHKNRYANVAAYDHSRVVLSNVEGYPGMDYINANYVDGYDKPRSYIATQGPLPETFSDFWRMVWEEQSVTIVMLTNLEERSRVKCDQYWPSRGTATYGDIEVTLLESVHLAHYTMRTMRLKMVGEPEVREIKHLQYTAWPDHGVPDHPTPFLIFLKRVKTLNPNDAGPIISHCSAGIGRTGAFIVIDCMLERLRYDNTVDIYGCVTALRAQRSYMVQTEEQYIFIHDAVLDAVNSGSTEVPASRLHQHLHILSQPSADQLSGIDMEFRHLTTLKWTSNRCTVANLPVNRPKNRMLSAVPYDSNRVIMRLLPGADGSDYINASWIDGYKERGAYIATQAPTNETAADFWRAIWEHNSPIIAMLVRTNERGQEQCSDYWPLETGVQVGMLVVEPMAEYDMKHYHLREFRISDINTREVRTVRQFHFMEWPDVGKPHTADHFLDFVTQVHNTYAQFGCTGPITVHCCSGAGRTAVFIALSIILDRMRAEHVVDVFTTVKLLRTERQNMIQEPEQYHFLYLAAYEYLAAYDNFS.

A signal peptide spans 1–42; the sequence is MIQFRNKNNSMNRIARHLRNVARRKGSSLLLFLMLSTVLVAA. Residues Asn-8 and Asn-116 are each glycosylated (N-linked (GlcNAc...) asparagine). Residues 43 to 1497 are Extracellular-facing; sequence KEDDPARLVV…LRGASQKSSP (1455 aa). Ig-like C2-type domains are found at residues 47 to 139, 151 to 240, and 250 to 334; these read PARL…ASLT, PQIE…KAAN, and PYFS…TTVI. 2 cysteine pairs are disulfide-bonded: Cys-69/Cys-122 and Cys-172/Cys-225. 2 N-linked (GlcNAc...) asparagine glycosylation sites follow: Asn-269 and Asn-315. A disulfide bridge links Cys-272 with Cys-318. 9 Fibronectin type-III domains span residues 341–434, 439–535, 539–628, 633–748, 752–856, 857–956, 957–1053, 1058–1158, and 1181–1287; these read PPVN…TKPS, APVS…TRQG, QPPM…TIAS, SPTI…TLED, APRN…IPPE, APEI…PVGS, PDGE…PDPA, PPTN…NYMT, and MVQN…TGPP. N-linked (GlcNAc...) asparagine glycosylation occurs at Asn-574. Residues Asn-945, Asn-988, Asn-1069, Asn-1141, Asn-1212, and Asn-1330 are each glycosylated (N-linked (GlcNAc...) asparagine). A disordered region spans residues 1355–1392; that stretch reads LARSLSVSPSKKLKRKASEVGDDSQSASYHPKEKRARR. A helical transmembrane segment spans residues 1498–1518; the sequence is WVGACIAFLVLFSIVGMLICW. At 1519–2200 the chain is on the cytoplasmic side; the sequence is WLRCNKKSAG…EYLAAYDNFS (682 aa). Tyrosine-protein phosphatase domains follow at residues 1647 to 1902 and 1933 to 2192; these read FQSE…VLDA and IDME…AYEY. Substrate-binding positions include Asp-1811, 1843-1849, and Gln-1887; that span reads CSAGIGR. Cys-1843 acts as the Phosphocysteine intermediate in catalysis. Cys-2133 acts as the Phosphocysteine intermediate in catalysis.

This sequence belongs to the protein-tyrosine phosphatase family. Receptor class 2A subfamily. Both isoforms are ubiquitously expressed in early embryos. In later embryos, larvae and adults expression is highest in the nerve ring, dorsal cord, ventral cord and epithelial tissues.

Its subcellular location is the cell junction. It is found in the adherens junction. The protein resides in the cell membrane. It carries out the reaction O-phospho-L-tyrosyl-[protein] + H2O = L-tyrosyl-[protein] + phosphate. Has a role in early neural and epidermal development; neuroblast movements during closure of the gastrulation cleft and epidermal morphogenesis. Vab-1 and ptp-3 may function redundantly within the same sets of neuronal precursors. In Caenorhabditis elegans, this protein is Tyrosine-protein phosphatase Lar-like (ptp-3).